We begin with the raw amino-acid sequence, 410 residues long: DAVTVASHVRKDLDTLTAGEIESLRSAFLDIQQDHTYENIASFHGKPGLCQHEGHKVACCVHGMPTFPSWHRLYVEQVEEALLDHGSSVAVPYFDWISPIQKLPDLISKATYYNSREQRFDPNPFFSGKVAGEDAVTTRDPQPELFNNNYFYEQALYALEQDNFCDFEIQFEVLHNALHSWLGGHAKYSFSSLDYTAFDPVFFLHHANTDRLWAIWQELQRYRGLPYNEADCAINLMRKPLQPFQDKKLNPRNITNIYSRPADTFDYRNHFHYEYDTLELNHQTVPQLENLLKRRQEYGRVFAGFLIHNNGLSADVTVYVCVPSGPKGKNDCNHKAGVFSVLGGELEMPFTFDRLYKLQITDTIKQLGLKVNNAASYQLKVEIKAVPGTLLDPHILPDPSIIFEPGTKER.

Cu cation-binding residues include His-44 and His-55. A disulfide bond links Cys-50 and Cys-59. Positions 60–62 (CVH) form a cross-link, 2'-(S-cysteinyl)-histidine (Cys-His). Cu cation-binding residues include His-71, His-175, His-179, and His-206. An intrachain disulfide couples Cys-165 to Cys-232. A glycan (N-linked (GlcNAc...) asparagine) is linked at Asn-253. Cys-321 and Cys-332 are joined by a disulfide.

The protein belongs to the tyrosinase family. Hemocyanin subfamily. In terms of assembly, decamers of large identical subunits (450 kDa), each containing 8 globular oxygen-binding functional units. Cu(2+) serves as cofactor.

Functionally, hemocyanins are copper-containing oxygen carriers occurring freely dissolved in the hemolymph of many mollusks and arthropods. This is Hemocyanin, beta-C chain unit D from Helix pomatia (Roman snail).